Consider the following 440-residue polypeptide: D-serine dehydratase (440 aa).

Lys116 is modified (N6-(pyridoxal phosphate)lysine).

It belongs to the serine/threonine dehydratase family. DsdA subfamily. In terms of assembly, monomer. Pyridoxal 5'-phosphate serves as cofactor.

It carries out the reaction D-serine = pyruvate + NH4(+). The chain is D-serine dehydratase from Salmonella choleraesuis (strain SC-B67).